Here is a 225-residue protein sequence, read N- to C-terminus: Small ribosomal subunit protein uS3 (225 aa).

Positions 38 to 106 constitute a KH type-2 domain; it reads IRKFIQSRFS…PVNLNIIEVK (69 aa).

Belongs to the universal ribosomal protein uS3 family. In terms of assembly, part of the 30S ribosomal subunit. Forms a tight complex with proteins S10 and S14.

In terms of biological role, binds the lower part of the 30S subunit head. Binds mRNA in the 70S ribosome, positioning it for translation. This is Small ribosomal subunit protein uS3 from Leptospira borgpetersenii serovar Hardjo-bovis (strain JB197).